The following is a 113-amino-acid chain: MKVSVAALSCLMLVAVLGSQAQFTNDAETELMMSKLPLENPVVLNSFHFAADCCTSYISQSIPCSLMKSYFETSSECSKPGVIFLTKKGRQVCAKPSGPGVQDCMKKLKPYSI.

An N-terminal signal peptide occupies residues 1 to 21; it reads MKVSVAALSCLMLVAVLGSQA. 3 disulfides stabilise this stretch: Cys-53/Cys-77, Cys-54/Cys-93, and Cys-64/Cys-104.

It belongs to the intercrine beta (chemokine CC) family. In terms of assembly, monomer. In terms of processing, the N-terminal is proteolytically cleaved by proteases associated with inflammatory responses. The processed forms CCL15(22-92), CCL15(25-92) and CCL15(29-92) exhibit increase in CCR1-mediated signaling and chemotaxis assays in vitro. In terms of tissue distribution, most abundant in heart, skeletal muscle and adrenal gland. Lower levels in placenta, liver, pancreas and bone marrow. CCL15(22-92), CCL15(25-92) and CCL15(29-92) are found in high levels in synovial fluids from rheumatoid patients.

Its subcellular location is the secreted. In terms of biological role, chemotactic factor that attracts T-cells and monocytes, but not neutrophils, eosinophils, or B-cells. Acts mainly via CC chemokine receptor CCR1. Also binds to CCR3. CCL15(22-92), CCL15(25-92) and CCL15(29-92) are more potent chemoattractants than the CCL15. This chain is C-C motif chemokine 15 (CCL15), found in Homo sapiens (Human).